Consider the following 298-residue polypeptide: Mimecan (298 aa).

The signal sequence occupies residues 1–19; it reads METVHSTFLLLLFVPLTQQ. N-linked (GlcNAc...) (keratan sulfate) asparagine glycosylation is present at asparagine 88. LRR repeat units lie at residues 112–131, 132–155, 156–179, 180–199, 200–225, 226–246, and 247–277; these read DAVP…FNKI, KKLT…GNLI, EDIE…ENQL, LRLP…HNKI, KSKG…HNDL, ESVP…FNSI, and SSLT…GNPI. Cysteine 255 and cysteine 288 are oxidised to a cystine. Asparagine 258 is a glycosylation site (N-linked (GlcNAc...) (keratan sulfate) asparagine).

The protein belongs to the small leucine-rich proteoglycan (SLRP) family. SLRP class III subfamily. In terms of processing, contains keratan sulfate.

It is found in the secreted. It localises to the extracellular space. The protein resides in the extracellular matrix. Induces bone formation in conjunction with TGF-beta-1 or TGF-beta-2. In Mus musculus (Mouse), this protein is Mimecan (Ogn).